The chain runs to 79 residues: Dolichyl-diphosphooligosaccharide--protein glycosyltransferase subunit TMEM258 (79 aa).

Helical transmembrane passes span Val-17–Phe-37 and Leu-55–Val-75.

The protein belongs to the OST5 family. In terms of assembly, component of the oligosaccharyltransferase (OST) complex.

Its subcellular location is the membrane. The protein resides in the endoplasmic reticulum. The protein localises to the cytoplasm. Its pathway is protein modification; protein glycosylation. In terms of biological role, subunit of the oligosaccharyl transferase (OST) complex that catalyzes the initial transfer of a defined glycan (Glc(3)Man(9)GlcNAc(2) in eukaryotes) from the lipid carrier dolichol-pyrophosphate to an asparagine residue within an Asn-X-Ser/Thr consensus motif in nascent polypeptide chains, the first step in protein N-glycosylation. N-glycosylation occurs cotranslationally and the complex associates with the Sec61 complex at the channel-forming translocon complex that mediates protein translocation across the endoplasmic reticulum (ER). All subunits are required for a maximal enzyme activity. The chain is Dolichyl-diphosphooligosaccharide--protein glycosyltransferase subunit TMEM258 from Gallus gallus (Chicken).